A 396-amino-acid chain; its full sequence is Putative cystathionine beta-lyase (396 aa).

At K210 the chain carries N6-(pyridoxal phosphate)lysine.

Belongs to the trans-sulfuration enzymes family. The cofactor is pyridoxal 5'-phosphate.

It catalyses the reaction L,L-cystathionine + H2O = L-homocysteine + pyruvate + NH4(+). It carries out the reaction an S-substituted L-cysteine + H2O = a thiol + pyruvate + NH4(+). It functions in the pathway amino-acid biosynthesis; L-methionine biosynthesis via de novo pathway; L-homocysteine from L-cystathionine: step 1/1. Catalyzes the cleavage of cystathionine to homocysteine, pyruvate and ammonia during methionine biosynthesis. This is Putative cystathionine beta-lyase (metC) from Rhizobium johnstonii (strain DSM 114642 / LMG 32736 / 3841) (Rhizobium leguminosarum bv. viciae).